A 230-amino-acid polypeptide reads, in one-letter code: Protein CWC15 homolog B (230 aa).

Residues M1–A126 are disordered. Over residues D22–D34 the composition is skewed to polar residues. Residues E52–T84 are compositionally biased toward basic and acidic residues. Over residues D102–T124 the composition is skewed to acidic residues. A coiled-coil region spans residues D121–N165.

Belongs to the CWC15 family. As to quaternary structure, identified in the spliceosome C complex. Component of the minor spliceosome, which splices U12-type introns.

It localises to the nucleus. Involved in pre-mRNA splicing as component of the spliceosome. This Xenopus laevis (African clawed frog) protein is Protein CWC15 homolog B (cwc15-b).